The following is a 96-amino-acid chain: Conantokin-E (96 aa).

The N-terminal stretch at 1–24 is a signal peptide; sequence LLVPLVTFHLILGMGTLDHGGALT. Positions 25-72 are excised as a propeptide; sequence ERRSADATALKPEPVLLQKSDARSTDDNDKDRLTQMKRILKKRGNKAR. Residues 28–57 are disordered; it reads SADATALKPEPVLLQKSDARSTDDNDKDRL. Residues 44–57 show a composition bias toward basic and acidic residues; the sequence is SDARSTDDNDKDRL. A 4-carboxyglutamate mark is found at Glu-75, Glu-76, Glu-82, Glu-86, and Glu-95. A divalent metal cation-binding residues include Glu-82 and Glu-86. Cys-83 and Cys-96 form a disulfide bridge.

Belongs to the conotoxin B superfamily. Expressed by the venom duct.

Its subcellular location is the secreted. Functionally, conantokins inhibit N-methyl-D-aspartate (NMDA) receptors. This toxin has the highest potency for the NR2B/GRIN2B subunit, followed by NR2A/GRIN2A, NR2C/GRIN2C, and NR2D/GRIN2D subunits. This chain is Conantokin-E, found in Conus ermineus (Agate cone).